The following is a 729-amino-acid chain: Ribosomal RNA large subunit methyltransferase K/L (729 aa).

The THUMP domain maps to 47 to 158 (TFYRLCLWSR…KNELTLALDL (112 aa)).

It belongs to the methyltransferase superfamily. RlmKL family.

The protein resides in the cytoplasm. The enzyme catalyses guanosine(2445) in 23S rRNA + S-adenosyl-L-methionine = N(2)-methylguanosine(2445) in 23S rRNA + S-adenosyl-L-homocysteine + H(+). It carries out the reaction guanosine(2069) in 23S rRNA + S-adenosyl-L-methionine = N(2)-methylguanosine(2069) in 23S rRNA + S-adenosyl-L-homocysteine + H(+). Its function is as follows. Specifically methylates the guanine in position 2445 (m2G2445) and the guanine in position 2069 (m7G2069) of 23S rRNA. This is Ribosomal RNA large subunit methyltransferase K/L from Dichelobacter nodosus (strain VCS1703A).